The following is a 614-amino-acid chain: MSDQESVVSFNSQNTSMVDVEGQQPQQYVPSKTNSRANQLKLTKTETVKSLQDLGVTSAAPVPDINAPQTAKNNIFPEEYTMETPSGLVPVATLQSMGRTASALSRTRTKQLNRTATNSSSTGKEEMEEEETEEREDQSGENELDPEIEFVTFVTGDPENPHNWPSWVRWSYTVLLSILVICVAYGSACISGGLGTVEKKYHVGMEAAILSCSLMVIGFSLGPLIWSPVSDLYGRRVAYFVSMGLYVIFNIPCALAPNLGCLLACRFLCGVWSSSGLCLVGGSIADMFPSETRGKAIAFFAFAPYVGPVVGPLVNGFISVSTGRMDLIFWVNMAFAGVMWIISSAIPETYAPVILKRKAARLRKETGNPKIMTEQEAQGVSMSEMMRACLLRPLYFAVTEPVLVATCFYVCLIYSLLYAFFFAFPVIFGELYGYKDNLVGLMFIPIVIGALWALATTFYCENKYLQIVKQRKPTPEDRLLGAKIGAPFAAIALWILGATAYKHIIWVGPASAGLAFGFGMVLIYYSLNNYIIDCYVQYASSALATKVFLRSAGGAAFPLFTIQMYHKLNLHWGSWLLAFISTAMIALPFAFSYWGKGLRHKLSKKDYSIDSVEM.

The tract at residues 1 to 40 (MSDQESVVSFNSQNTSMVDVEGQQPQQYVPSKTNSRANQL) is disordered. Residues 1–173 (MSDQESVVSF…WPSWVRWSYT (173 aa)) lie on the Cytoplasmic side of the membrane. The residue at position 50 (serine 50) is a Phosphoserine. The segment covering 99–122 (RTASALSRTRTKQLNRTATNSSST) has biased composition (polar residues). Residues 99–144 (RTASALSRTRTKQLNRTATNSSSTGKEEMEEEETEEREDQSGENEL) are disordered. The span at 126 to 144 (EMEEEETEEREDQSGENEL) shows a compositional bias: acidic residues. Residues 174 to 194 (VLLSILVICVAYGSACISGGL) form a helical membrane-spanning segment. Residues 195-206 (GTVEKKYHVGME) lie on the Extracellular side of the membrane. Residues 207–227 (AAILSCSLMVIGFSLGPLIWS) traverse the membrane as a helical segment. The Cytoplasmic segment spans residues 228 to 236 (PVSDLYGRR). Residues 237–257 (VAYFVSMGLYVIFNIPCALAP) form a helical membrane-spanning segment. Residues 258-266 (NLGCLLACR) lie on the Extracellular side of the membrane. A helical membrane pass occupies residues 267-287 (FLCGVWSSSGLCLVGGSIADM). The Cytoplasmic segment spans residues 288 to 297 (FPSETRGKAI). The chain crosses the membrane as a helical span at residues 298–318 (AFFAFAPYVGPVVGPLVNGFI). The Extracellular portion of the chain corresponds to 319 to 326 (SVSTGRMD). A helical transmembrane segment spans residues 327 to 347 (LIFWVNMAFAGVMWIISSAIP). The Cytoplasmic portion of the chain corresponds to 348–407 (ETYAPVILKRKAARLRKETGNPKIMTEQEAQGVSMSEMMRACLLRPLYFAVTEPVLVATC). A helical transmembrane segment spans residues 408–428 (FYVCLIYSLLYAFFFAFPVIF). Residues 429–437 (GELYGYKDN) are Extracellular-facing. Residues 438-458 (LVGLMFIPIVIGALWALATTF) traverse the membrane as a helical segment. Residues 459 to 478 (YCENKYLQIVKQRKPTPEDR) lie on the Cytoplasmic side of the membrane. A helical membrane pass occupies residues 479 to 499 (LLGAKIGAPFAAIALWILGAT). At 500–503 (AYKH) the chain is on the extracellular side. A helical membrane pass occupies residues 504–524 (IIWVGPASAGLAFGFGMVLIY). The Cytoplasmic segment spans residues 525-541 (YSLNNYIIDCYVQYASS). The chain crosses the membrane as a helical span at residues 542–562 (ALATKVFLRSAGGAAFPLFTI). Residues 563–574 (QMYHKLNLHWGS) are Extracellular-facing. The chain crosses the membrane as a helical span at residues 575-595 (WLLAFISTAMIALPFAFSYWG). The Cytoplasmic segment spans residues 596-614 (KGLRHKLSKKDYSIDSVEM).

Belongs to the major facilitator superfamily. DHA1 family. Polyamines/proton antiporter (TC 2.A.1.2.16) subfamily.

It localises to the cell membrane. Its function is as follows. Cell membrane polyamine/proton antiporter, involved in the detoxification of excess polyamines in the cytoplasm. Recognizes spermine, but not spermidine. This chain is Polyamine transporter 2 (TPO2), found in Saccharomyces cerevisiae (strain ATCC 204508 / S288c) (Baker's yeast).